A 161-amino-acid polypeptide reads, in one-letter code: MSYDLETAEHAAYAPFFGYMGAASAQIFTVLGAAYGTAKSAVGICSMGVMRPELIMKSVIPVIMAGIIGIYGLVVAMVLKGKVQAASAGYDLNKGFAHLAAGLTCGLCGLGAGYAIGIVGDAGVRGTAQQPRLFVGMILILIFSEVLGLYGMIVALILGTS.

The Lumenal segment spans residues 1–15 (MSYDLETAEHAAYAP). The chain crosses the membrane as a helical span at residues 16–36 (FFGYMGAASAQIFTVLGAAYG). At 37-58 (TAKSAVGICSMGVMRPELIMKS) the chain is on the cytoplasmic side. Residues 59 to 79 (VIPVIMAGIIGIYGLVVAMVL) form a helical membrane-spanning segment. Over 80–98 (KGKVQAASAGYDLNKGFAH) the chain is Lumenal. Residues 99–119 (LAAGLTCGLCGLGAGYAIGIV) form a helical membrane-spanning segment. At 120–137 (GDAGVRGTAQQPRLFVGM) the chain is on the cytoplasmic side. A helical transmembrane segment spans residues 138-158 (ILILIFSEVLGLYGMIVALIL). Residues 159-161 (GTS) are Lumenal-facing.

This sequence belongs to the V-ATPase proteolipid subunit family. In terms of assembly, V-ATPase is a heteromultimeric enzyme made up of two complexes: the ATP-hydrolytic V1 complex and the proton translocation V0 complex. The V1 complex consists of three catalytic AB heterodimers that form a heterohexamer, three peripheral stalks each consisting of EG heterodimers, one central rotor including subunits D and F, and the regulatory subunits C and H. The proton translocation complex V0 consists of the proton transport subunit a, a ring of proteolipid subunits c9c'', rotary subunit d, subunits e and f, and the accessory subunits vah-19/Ac45 and vah-20/PRR.

It localises to the membrane. Functionally, proton-conducting pore forming subunit of the V0 complex of vacuolar(H+)-ATPase (V-ATPase), a multisubunit enzyme composed of a peripheral complex (V1) that hydrolyzes ATP and a membrane integral complex (V0) that translocates protons. V-ATPase is responsible for acidifying and maintaining the pH of intracellular compartments and in some cell types, is targeted to the plasma membrane, where it is responsible for acidifying the extracellular environment. Involved in necrotic cell death. Required along with other vacuolar ATPase components for the removal of protein aggregates which form in immature oocytes in the distal gonad. This removal occurs as the oocytes mature and move to the proximal gonad, is triggered by the introduction of sperm through mating and occurs before fertilization. The introduction of sperm triggers V-ATPase accumulation in proximal oocytes and induces lysosomal acidification which leads to engulfing of protein aggregates by lysosomes and subsequent clearance of the aggregates. Lysosomal acidification also leads to changes in mitochondrial morphology and function. Mitochondria in distal immature oocytes are fragmented, produce high levels of reactive oxygen species (ROS) and have high membrane potential, indicative of metabolic inactivity. In contrast, mitochondria in proximal mature oocytes are tubular with lower ROS levels and membrane potential, indicative of an active metabolic state required for aggregate mobilization before clearance. The polypeptide is V-type proton ATPase 16 kDa proteolipid subunit c 2 (Caenorhabditis briggsae).